The sequence spans 347 residues: NADH-ubiquinone oxidoreductase chain 2 (347 aa).

Helical transmembrane passes span 1–21 (MNPL…AIVA), 25–45 (HWLM…PILM), 59–79 (YFLT…MNLV), 111–131 (FHFW…LILL), 149–169 (INLD…GWGG), 178–198 (IMAY…TYNP), 201–221 (TLLN…MFML), 237–257 (MPLL…LPPL), 274–294 (NSVI…YFYM), and 326–346 (LSPL…LALL).

It belongs to the complex I subunit 2 family. In terms of assembly, core subunit of respiratory chain NADH dehydrogenase (Complex I) which is composed of 45 different subunits. Interacts with TMEM242.

The protein resides in the mitochondrion inner membrane. It catalyses the reaction a ubiquinone + NADH + 5 H(+)(in) = a ubiquinol + NAD(+) + 4 H(+)(out). In terms of biological role, core subunit of the mitochondrial membrane respiratory chain NADH dehydrogenase (Complex I) which catalyzes electron transfer from NADH through the respiratory chain, using ubiquinone as an electron acceptor. Essential for the catalytic activity and assembly of complex I. This Pteropus rodricensis (Rodriguez flying fox) protein is NADH-ubiquinone oxidoreductase chain 2.